Here is a 244-residue protein sequence, read N- to C-terminus: MLSNTLIIACLLVIGTTIALIAVQKASSKTGIKQKSYQPSIIIAGPQNSGKTSLLTLLTTDSVRPTVVSQEPLSAADYDGSGVTLVDFPGHVKLRYKLSDYLKTRAKFVKGLIFMVDSTVDPKKLTTTAEFLVDILSITESSCENGIDILIACNKSELFTARPPSKIKDALESEIQKVIERRKKSLNEVERKINEEDYAENTLDVLQSTDGFKFANLEASVVAFEGSINKRKISQWREWIDEKL.

The helical transmembrane segment at I7 to V23 threads the bilayer. Residues G45–S53, T66–S69, G90, and N154–E157 each bind GTP.

Belongs to the SRP receptor beta subunit family. In terms of assembly, heterodimer of an alpha and a beta chain.

The protein localises to the endoplasmic reticulum membrane. Its function is as follows. Component of the signal recognition particle (SRP) complex receptor (SR). Ensures, in conjunction with the SRP complex, the correct targeting of the nascent secretory proteins to the endoplasmic reticulum membrane system. May mediate the membrane association of SR. The polypeptide is Signal recognition particle receptor subunit beta (SRP102) (Saccharomyces cerevisiae (strain ATCC 204508 / S288c) (Baker's yeast)).